A 160-amino-acid chain; its full sequence is Transcription elongation factor GreA (160 aa).

The stretch at 1 to 72 forms a coiled coil; it reads MAEKTYVMTL…QIQILETKIR (72 aa).

Belongs to the GreA/GreB family.

In terms of biological role, necessary for efficient RNA polymerase transcription elongation past template-encoded arresting sites. The arresting sites in DNA have the property of trapping a certain fraction of elongating RNA polymerases that pass through, resulting in locked ternary complexes. Cleavage of the nascent transcript by cleavage factors such as GreA or GreB allows the resumption of elongation from the new 3'terminus. GreA releases sequences of 2 to 3 nucleotides. The sequence is that of Transcription elongation factor GreA from Streptococcus thermophilus (strain ATCC BAA-491 / LMD-9).